Consider the following 603-residue polypeptide: Zyxin (603 aa).

Positions 1-13 are enriched in pro residues; that stretch reads MGPPPPPPPPPLL. Disordered regions lie at residues 1–131, 166–193, 218–237, 310–333, and 363–395; these read MGPP…HRDP, TQYA…PYSS, ATTT…NKYG, RDEG…SASS, and LNQP…TTST. The span at 69–95 shows a compositional bias: basic and acidic residues; it reads VRGDVENLSDGRLDRPHQQLPDGDRTY. Residues 184–193 show a composition bias toward polar residues; sequence EATYVSPYSS. Over residues 218–234 the composition is skewed to low complexity; that stretch reads ATTTTSSNSLNENNNSN. Polar residues-rich tracts occupy residues 315-333, 363-373, and 382-391; these read TESQ…SASS, LNQPADTSPSI, and PDSSRANYSA. LIM zinc-binding domains lie at 409-470, 471-529, and 530-601; these read NICV…SLEK, CTAC…KFAP, and RCAL…RVVS.

This sequence belongs to the zyxin/ajuba family. In terms of assembly, interacts with dyc-1. Interacts with glh-1 and glh-3. In terms of tissue distribution, expressed in neurons and body wall muscle. Expressed in pharyngeal, enteric and uterine muscles and in spermatheca.

The protein localises to the nucleus. The protein resides in the cytoplasm. Its subcellular location is the myofibril. It is found in the sarcomere. It localises to the m line. The protein localises to the cell projection. The protein resides in the axon. Its subcellular location is the cell junction. It is found in the focal adhesion. It localises to the cytoskeleton. Functions both as a mechanical stabilizer (via LIM domains) of focal adhesions, and as a sensor component for muscle cell damage (via N-terminus). Regulates, stabilizes and maintains posterior lateral mechanosensory (PLM) synaptic branch extension and new synapse formation and growth during larval development. This chain is Zyxin, found in Caenorhabditis elegans.